The primary structure comprises 146 residues: Ribosome-binding factor A (146 aa).

Positions Q122–A146 are disordered. Acidic residues predominate over residues D130–A146.

It belongs to the RbfA family. Monomer. Binds 30S ribosomal subunits, but not 50S ribosomal subunits or 70S ribosomes.

It is found in the cytoplasm. In terms of biological role, one of several proteins that assist in the late maturation steps of the functional core of the 30S ribosomal subunit. Associates with free 30S ribosomal subunits (but not with 30S subunits that are part of 70S ribosomes or polysomes). Required for efficient processing of 16S rRNA. May interact with the 5'-terminal helix region of 16S rRNA. The chain is Ribosome-binding factor A from Shewanella sp. (strain MR-7).